The chain runs to 105 residues: Malonate decarboxylase acyl carrier protein (105 aa).

Ser-28 bears the O-(phosphoribosyl dephospho-coenzyme A)serine mark.

The protein belongs to the MdcC family. Post-translationally, covalently binds the prosthetic group of malonate decarboxylase.

Its subcellular location is the cytoplasm. Subunit of malonate decarboxylase, it is an acyl carrier protein to which acetyl and malonyl thioester residues are bound via a 2'-(5''-phosphoribosyl)-3'-dephospho-CoA prosthetic group and turn over during the catalytic mechanism. This is Malonate decarboxylase acyl carrier protein from Xanthomonas axonopodis pv. citri (strain 306).